Here is a 31-residue protein sequence, read N- to C-terminus: Cytochrome b6-f complex subunit 8 (31 aa).

A helical transmembrane segment spans residues 5–25; sequence IVSLAWAALMVVFTFSLSLVV.

The protein belongs to the PetN family. In terms of assembly, the 4 large subunits of the cytochrome b6-f complex are cytochrome b6, subunit IV (17 kDa polypeptide, PetD), cytochrome f and the Rieske protein, while the 4 small subunits are PetG, PetL, PetM and PetN. The complex functions as a dimer.

Its subcellular location is the plastid. It localises to the chloroplast thylakoid membrane. Component of the cytochrome b6-f complex, which mediates electron transfer between photosystem II (PSII) and photosystem I (PSI), cyclic electron flow around PSI, and state transitions. The protein is Cytochrome b6-f complex subunit 8 of Cicer arietinum (Chickpea).